The following is a 145-amino-acid chain: uncharacterized protein (145 aa).

This is an uncharacterized protein from Saccharomyces cerevisiae (strain ATCC 204508 / S288c) (Baker's yeast).